Reading from the N-terminus, the 370-residue chain is Cysteine-type anaerobic sulfatase-maturating enzyme (370 aa).

The Radical SAM core domain maps to 1-227 (MPPLSLLIKP…LKNLFDLWYE (227 aa)). Positions 15 and 19 each coordinate [4Fe-4S] cluster. S-adenosyl-L-methionine is bound at residue Tyr21. Residue Cys22 participates in [4Fe-4S] cluster binding. 4 residues coordinate S-adenosyl-L-methionine: Gly66, Ser122, Arg134, and Leu195. Positions 255, 261, and 276 each coordinate [4Fe-4S] cluster. Asp277 serves as the catalytic Proton acceptor. [4Fe-4S] cluster-binding residues include Cys317, Cys320, Cys326, Cys330, and Cys348.

The protein belongs to the radical SAM superfamily. Anaerobic sulfatase-maturating enzyme family. The cofactor is [4Fe-4S] cluster.

The catalysed reaction is L-cysteinyl-[sulfatase] + S-adenosyl-L-methionine + H2O = 3-oxo-L-alanyl-[sulfatase] + hydrogen sulfide + 5'-deoxyadenosine + L-methionine + 2 H(+). It functions in the pathway protein modification; sulfatase oxidation. Its function is as follows. Involved in 'Cys-type' sulfatase maturation under anaerobic conditions. Catalyzes the post-translational modification of cysteine into 3-oxoalanine (also known as C(alpha)-formylglycine (FGly)), by a free radical chemical mechanism initiated via the reductive cleavage of S-adenosyl-L-methionine (SAM). This Clostridium perfringens (strain 13 / Type A) protein is Cysteine-type anaerobic sulfatase-maturating enzyme.